Reading from the N-terminus, the 365-residue chain is Protein RecA (365 aa).

81-88 (GPESSGKT) is a binding site for ATP.

It belongs to the RecA family.

Its subcellular location is the cytoplasm. Can catalyze the hydrolysis of ATP in the presence of single-stranded DNA, the ATP-dependent uptake of single-stranded DNA by duplex DNA, and the ATP-dependent hybridization of homologous single-stranded DNAs. It interacts with LexA causing its activation and leading to its autocatalytic cleavage. The polypeptide is Protein RecA (Borreliella afzelii (strain PKo) (Borrelia afzelii)).